A 158-amino-acid polypeptide reads, in one-letter code: SsrA-binding protein (158 aa).

The protein belongs to the SmpB family.

It localises to the cytoplasm. In terms of biological role, required for rescue of stalled ribosomes mediated by trans-translation. Binds to transfer-messenger RNA (tmRNA), required for stable association of tmRNA with ribosomes. tmRNA and SmpB together mimic tRNA shape, replacing the anticodon stem-loop with SmpB. tmRNA is encoded by the ssrA gene; the 2 termini fold to resemble tRNA(Ala) and it encodes a 'tag peptide', a short internal open reading frame. During trans-translation Ala-aminoacylated tmRNA acts like a tRNA, entering the A-site of stalled ribosomes, displacing the stalled mRNA. The ribosome then switches to translate the ORF on the tmRNA; the nascent peptide is terminated with the 'tag peptide' encoded by the tmRNA and targeted for degradation. The ribosome is freed to recommence translation, which seems to be the essential function of trans-translation. The chain is SsrA-binding protein from Chloroflexus aggregans (strain MD-66 / DSM 9485).